Consider the following 436-residue polypeptide: Acrosin (436 aa).

An N-terminal signal peptide occupies residues 1 to 19; the sequence is MVEMLPTVAVLVLAVSVVA. The N-linked (GlcNAc...) asparagine glycan is linked to Asn22. 6 cysteine pairs are disulfide-bonded: Cys25–Cys155, Cys29–Cys163, Cys74–Cys90, Cys178–Cys247, Cys210–Cys226, and Cys237–Cys267. The 249-residue stretch at 43 to 291 folds into the Peptidase S1 domain; the sequence is IVSGQSAQLG…YLDWIASKIG (249 aa). Catalysis depends on charge relay system residues His89 and Asp143. Asn211 carries N-linked (GlcNAc...) asparagine glycosylation. Ser241 (charge relay system) is an active-site residue. The propeptide at 346 to 436 is pro-rich; it reads PSSTQTSSSL…NKPSEPFLHS (91 aa).

This sequence belongs to the peptidase S1 family. As to quaternary structure, heavy chain (catalytic) and a light chain linked by two disulfide bonds. Forms a heterodimer with SERPINA5.

The enzyme catalyses Preferential cleavage: Arg-|-Xaa, Lys-|-Xaa.. With respect to regulation, inhibited by SERPINA5. Acrosin is the major protease of mammalian spermatozoa. It is a serine protease of trypsin-like cleavage specificity, it is synthesized in a zymogen form, proacrosin and stored in the acrosome. The chain is Acrosin (Acr) from Mus musculus (Mouse).